The following is a 346-amino-acid chain: Holliday junction branch migration complex subunit RuvB (346 aa).

Residues 1-182 are large ATPase domain (RuvB-L); the sequence is MSERLVTSNE…FGVLCSMEYY (182 aa). Residues L21, R22, G63, K66, T67, T68, 129–131, R172, Y182, and R219 each bind ATP; that span reads EDY. T67 lines the Mg(2+) pocket. A small ATPAse domain (RuvB-S) region spans residues 183–253; that stretch reads TDEQLKEIII…AAKKSLEILE (71 aa). The tract at residues 256–346 is head domain (RuvB-H); sequence GEGFDRIDNK…DSKQCTLFEK (91 aa). DNA contacts are provided by R311 and R316.

This sequence belongs to the RuvB family. In terms of assembly, homohexamer. Forms an RuvA(8)-RuvB(12)-Holliday junction (HJ) complex. HJ DNA is sandwiched between 2 RuvA tetramers; dsDNA enters through RuvA and exits via RuvB. An RuvB hexamer assembles on each DNA strand where it exits the tetramer. Each RuvB hexamer is contacted by two RuvA subunits (via domain III) on 2 adjacent RuvB subunits; this complex drives branch migration. In the full resolvosome a probable DNA-RuvA(4)-RuvB(12)-RuvC(2) complex forms which resolves the HJ.

It localises to the cytoplasm. The catalysed reaction is ATP + H2O = ADP + phosphate + H(+). The RuvA-RuvB-RuvC complex processes Holliday junction (HJ) DNA during genetic recombination and DNA repair, while the RuvA-RuvB complex plays an important role in the rescue of blocked DNA replication forks via replication fork reversal (RFR). RuvA specifically binds to HJ cruciform DNA, conferring on it an open structure. The RuvB hexamer acts as an ATP-dependent pump, pulling dsDNA into and through the RuvAB complex. RuvB forms 2 homohexamers on either side of HJ DNA bound by 1 or 2 RuvA tetramers; 4 subunits per hexamer contact DNA at a time. Coordinated motions by a converter formed by DNA-disengaged RuvB subunits stimulates ATP hydrolysis and nucleotide exchange. Immobilization of the converter enables RuvB to convert the ATP-contained energy into a lever motion, pulling 2 nucleotides of DNA out of the RuvA tetramer per ATP hydrolyzed, thus driving DNA branch migration. The RuvB motors rotate together with the DNA substrate, which together with the progressing nucleotide cycle form the mechanistic basis for DNA recombination by continuous HJ branch migration. Branch migration allows RuvC to scan DNA until it finds its consensus sequence, where it cleaves and resolves cruciform DNA. This Clostridium perfringens (strain ATCC 13124 / DSM 756 / JCM 1290 / NCIMB 6125 / NCTC 8237 / Type A) protein is Holliday junction branch migration complex subunit RuvB.